Reading from the N-terminus, the 267-residue chain is tRNA pseudouridine synthase A (267 aa).

The active-site Nucleophile is aspartate 53. Residue tyrosine 111 coordinates substrate.

Belongs to the tRNA pseudouridine synthase TruA family. As to quaternary structure, homodimer.

It catalyses the reaction uridine(38/39/40) in tRNA = pseudouridine(38/39/40) in tRNA. Its function is as follows. Formation of pseudouridine at positions 38, 39 and 40 in the anticodon stem and loop of transfer RNAs. This chain is tRNA pseudouridine synthase A, found in Alcanivorax borkumensis (strain ATCC 700651 / DSM 11573 / NCIMB 13689 / SK2).